Here is a 404-residue protein sequence, read N- to C-terminus: Rhomboid-related protein 3 (404 aa).

2 EF-hand domains span residues 34 to 69 and 70 to 105; these read APED…HSSK and LDPH…KRSN. The next 7 helical transmembrane spans lie at 164-184, 218-238, 250-270, 274-294, 303-325, 338-358, and 371-391; these read WFMI…GVSL, IFMH…LLVG, IGLV…VADM, VVGS…NIVM, FKLL…AVWL, PSFV…VVVL, and WWIF…WNIF. Ser-278 (nucleophile) is an active-site residue. His-343 is a catalytic residue.

This sequence belongs to the peptidase S54 family.

It is found in the membrane. The catalysed reaction is Cleaves type-1 transmembrane domains using a catalytic dyad composed of serine and histidine that are contributed by different transmembrane domains.. Its function is as follows. May be involved in regulated intramembrane proteolysis and the subsequent release of functional polypeptides from their membrane anchors. The polypeptide is Rhomboid-related protein 3 (RHBDL3) (Homo sapiens (Human)).